The following is a 199-amino-acid chain: MTDLYAEALATFAALYAEAQNSAELEASAMTLATANVDGRPSARTVLLKAFDARGFVFYSHLDSAKGRDLQTHPQAALLFLWRSLREAGIQVRIEGGVQLVSADESDAYFASRPRMSQIGAWASLQSQTLGSRAEFDAAIAKVEATFEGREVPRPEGWGGFRVVPQAFEFWYGAKFRLHERWRYEADAASHWSKRMLYP.

Residues 44–49 (RTVLLK), 59–60 (YS), Lys66, and Gln91 contribute to the FMN site. Lys49 is a substrate binding site. The substrate site is built by Tyr109, Arg113, and Ser117. Residues 126-127 (QS) and Trp171 contribute to the FMN site. 177-179 (RLH) is a binding site for substrate. FMN is bound at residue Arg181.

This sequence belongs to the pyridoxamine 5'-phosphate oxidase family. Homodimer. FMN is required as a cofactor.

The enzyme catalyses pyridoxamine 5'-phosphate + O2 + H2O = pyridoxal 5'-phosphate + H2O2 + NH4(+). It catalyses the reaction pyridoxine 5'-phosphate + O2 = pyridoxal 5'-phosphate + H2O2. It participates in cofactor metabolism; pyridoxal 5'-phosphate salvage; pyridoxal 5'-phosphate from pyridoxamine 5'-phosphate: step 1/1. It functions in the pathway cofactor metabolism; pyridoxal 5'-phosphate salvage; pyridoxal 5'-phosphate from pyridoxine 5'-phosphate: step 1/1. Functionally, catalyzes the oxidation of either pyridoxine 5'-phosphate (PNP) or pyridoxamine 5'-phosphate (PMP) into pyridoxal 5'-phosphate (PLP). The chain is Pyridoxine/pyridoxamine 5'-phosphate oxidase from Xanthomonas oryzae pv. oryzae (strain KACC10331 / KXO85).